Reading from the N-terminus, the 335-residue chain is Acetyl-coenzyme A carboxylase carboxyl transferase subunit alpha (335 aa).

The 255-residue stretch at 40–294 (QLETLAARRR…KEAIEKHLNA (255 aa)) folds into the CoA carboxyltransferase C-terminal domain.

Belongs to the AccA family. In terms of assembly, acetyl-CoA carboxylase is a heterohexamer composed of biotin carboxyl carrier protein (AccB), biotin carboxylase (AccC) and two subunits each of ACCase subunit alpha (AccA) and ACCase subunit beta (AccD).

It localises to the cytoplasm. The enzyme catalyses N(6)-carboxybiotinyl-L-lysyl-[protein] + acetyl-CoA = N(6)-biotinyl-L-lysyl-[protein] + malonyl-CoA. Its pathway is lipid metabolism; malonyl-CoA biosynthesis; malonyl-CoA from acetyl-CoA: step 1/1. Component of the acetyl coenzyme A carboxylase (ACC) complex. First, biotin carboxylase catalyzes the carboxylation of biotin on its carrier protein (BCCP) and then the CO(2) group is transferred by the carboxyltransferase to acetyl-CoA to form malonyl-CoA. This is Acetyl-coenzyme A carboxylase carboxyl transferase subunit alpha from Prochlorococcus marinus (strain MIT 9215).